The chain runs to 691 residues: Ribonucleoprotein PTB-binding 2 (691 aa).

Residues 1-30 are compositionally biased toward gly residues; sequence MAAAAGDGGGEGGAGLGSAAGLGPGPGLRG. Residues 1 to 47 are disordered; it reads MAAAAGDGGGEGGAGLGSAAGLGPGPGLRGQGPSAEAHEGAPDPMPA. Residue alanine 2 is modified to N-acetylalanine. RRM domains follow at residues 69 to 140, 142 to 220, and 231 to 309; these read RKIL…LQPT, ALLC…WMDV, and KCLC…FCAP. Disordered regions lie at residues 492–522 and 543–574; these read PNQH…EGNF and GHHK…GEPP. Residues 548 to 569 are compositionally biased toward polar residues; that stretch reads QQSQPKGTEISSGAASKNQTSL.

In terms of assembly, interacts with PTBP1 and RAVER1.

It localises to the nucleus. The protein localises to the cytoplasm. In terms of biological role, may bind single-stranded nucleic acids. This chain is Ribonucleoprotein PTB-binding 2 (RAVER2), found in Homo sapiens (Human).